Consider the following 788-residue polypeptide: Protein HHLF1 (788 aa).

3 disordered regions span residues 1–82 (MAQR…NFWH), 366–385 (TGTAAGTTSPPAASGTETEA), and 609–663 (IHKK…SRLP). The segment covering 16–25 (RGRGAGGPSG) has biased composition (gly residues). The span at 26-56 (VGSSPPSSCVPMGAPSTAGTGASAAATTTPG) shows a compositional bias: low complexity. The RNA-binding stretch occupies residues 74–248 (SGNNSNFWHG…HGAGEVVRLY (175 aa)). The segment covering 650–659 (LRRDDEDWKP) has biased composition (basic and acidic residues). An interaction with host EIF2AK2/PKR region spans residues 671–788 (LDETFWVLGS…IATHYHYNAQ (118 aa)).

It belongs to the herpesviridae US22 family. In terms of assembly, interacts with host EIF2AK2/PKR; this interaction retains EIF2AK2 to the host nucleus and prevents its activation. Interaction (via N-terminus) with host BECN1; this interaction inhibits host autophagy. Interacts with the viral DNA polymerase accessory subunit UL44. Interacts with host HSPA5.

The protein localises to the virion. The protein resides in the host cytoplasm. It is found in the host nucleus. In terms of biological role, inhibits the establishment of the antiviral state and the integrated stress response (ISR) in the infected cell. Prevents the phosphorylation of the host eukaryotic translation initiation factor eIF-2alpha/EIF2S1 and thus the shutoff of viral and cellular protein synthesis by directly interacting with EIF2AK2/PKR. Prevents stress granule formation in response to eIF-2alpha/EIF2S1 phosphorylation, thereby rescuing viral replication and protein synthesis. Also inhibits host autophagy by interacting with host Beclin-1/BECN1. The sequence is that of Protein HHLF1 (TRS1) from Homo sapiens (Human).